We begin with the raw amino-acid sequence, 348 residues long: D-alanine--D-alanine ligase (348 aa).

The ATP-grasp domain occupies 132–334; it reads KRVLESAGIP…YSDLIEELVS (203 aa). 162–217 lines the ATP pocket; sequence LETLSFPIFVKPANMGSSVGISKAESIEGLREAIALALKYDSRILIEQGVVAREIE. 3 residues coordinate Mg(2+): aspartate 288, glutamate 301, and asparagine 303.

Belongs to the D-alanine--D-alanine ligase family. It depends on Mg(2+) as a cofactor. The cofactor is Mn(2+).

The protein resides in the cytoplasm. The catalysed reaction is 2 D-alanine + ATP = D-alanyl-D-alanine + ADP + phosphate + H(+). It participates in cell wall biogenesis; peptidoglycan biosynthesis. Functionally, cell wall formation. The protein is D-alanine--D-alanine ligase of Streptococcus uberis (strain ATCC BAA-854 / 0140J).